Reading from the N-terminus, the 59-residue chain is Three-finger toxin MS1 (59 aa).

4 disulfides stabilise this stretch: C3/C22, C17/C39, C41/C52, and C53/C58.

It belongs to the three-finger toxin family. Short-chain subfamily. Type I alpha-neurotoxin sub-subfamily. In terms of tissue distribution, expressed by the venom gland.

Its subcellular location is the secreted. Functionally, produces peripheral paralysis by blocking neuromuscular transmission at the postsynaptic site. Binds to and inhibits the endogenous nicotinic acetylcholine receptors (nAChR) in human rhabdomyosarcoma TE 671 cell line with an IC(50) of 48.2 mM. This neurotoxin is lethal to mice by intraperitoneal injection and to zebrafish by injection at the back of the dorsolateral region. In Micrurus surinamensis (Surinam coral snake), this protein is Three-finger toxin MS1.